A 266-amino-acid chain; its full sequence is Large ribosomal subunit protein eL8 (266 aa).

The segment covering 104-130 (PETKQEKKQRLLARAEQKAAGKGDTPT) has biased composition (basic and acidic residues). The disordered stretch occupies residues 104 to 135 (PETKQEKKQRLLARAEQKAAGKGDTPTKRPPV).

Belongs to the eukaryotic ribosomal protein eL8 family. As to quaternary structure, component of the large ribosomal subunit.

The protein localises to the cytoplasm. Its function is as follows. Component of the large ribosomal subunit. The ribosome is a large ribonucleoprotein complex responsible for the synthesis of proteins in the cell. This chain is Large ribosomal subunit protein eL8 (RPL7A), found in Gallus gallus (Chicken).